Here is an 83-residue protein sequence, read N- to C-terminus: Acyl carrier protein (83 aa).

One can recognise a Carrier domain in the interval 2–77 (STIEEKVKTI…AAIDFISNSH (76 aa)). Position 37 is an O-(pantetheine 4'-phosphoryl)serine (serine 37).

Belongs to the acyl carrier protein (ACP) family. In terms of processing, 4'-phosphopantetheine is transferred from CoA to a specific serine of apo-ACP by AcpS. This modification is essential for activity because fatty acids are bound in thioester linkage to the sulfhydryl of the prosthetic group.

It is found in the cytoplasm. Its pathway is lipid metabolism; fatty acid biosynthesis. Its function is as follows. Carrier of the growing fatty acid chain in fatty acid biosynthesis. The polypeptide is Acyl carrier protein (Blochmanniella pennsylvanica (strain BPEN)).